Consider the following 580-residue polypeptide: Acyl-coenzyme A synthetase ACSM4, mitochondrial (580 aa).

A mitochondrion-targeting transit peptide spans 1-22; that stretch reads MKVLLRCQRLRFIWLAKPAGRH. Residues 229–237, 368–373, Asp-455, Arg-470, and Lys-566 each bind ATP; these read TSGTTGSPK and EGYGQT.

Belongs to the ATP-dependent AMP-binding enzyme family. Mg(2+) is required as a cofactor. Mn(2+) serves as cofactor. In terms of tissue distribution, detected in adult olfactory epithelium.

The protein resides in the mitochondrion. The enzyme catalyses a medium-chain fatty acid + ATP + CoA = a medium-chain fatty acyl-CoA + AMP + diphosphate. It carries out the reaction hexanoate + ATP + CoA = hexanoyl-CoA + AMP + diphosphate. It catalyses the reaction octanoate + ATP + CoA = octanoyl-CoA + AMP + diphosphate. The catalysed reaction is decanoate + ATP + CoA = decanoyl-CoA + AMP + diphosphate. The enzyme catalyses dodecanoate + ATP + CoA = dodecanoyl-CoA + AMP + diphosphate. Catalyzes the activation of fatty acids by CoA to produce an acyl-CoA, the first step in fatty acid metabolism. Capable of activating medium-chain fatty acids with a preference for C6-12 fatty acids. This Rattus norvegicus (Rat) protein is Acyl-coenzyme A synthetase ACSM4, mitochondrial (Acsm4).